The primary structure comprises 316 residues: Pantothenate kinase (316 aa).

95–102 (GSVAVGKS) is an ATP binding site.

It belongs to the prokaryotic pantothenate kinase family.

Its subcellular location is the cytoplasm. The enzyme catalyses (R)-pantothenate + ATP = (R)-4'-phosphopantothenate + ADP + H(+). It participates in cofactor biosynthesis; coenzyme A biosynthesis; CoA from (R)-pantothenate: step 1/5. This chain is Pantothenate kinase, found in Shewanella sp. (strain MR-4).